Here is a 305-residue protein sequence, read N- to C-terminus: UDP-3-O-acyl-N-acetylglucosamine deacetylase (305 aa).

Positions 78, 237, and 241 each coordinate Zn(2+). His264 (proton donor) is an active-site residue.

The protein belongs to the LpxC family. Zn(2+) serves as cofactor.

The enzyme catalyses a UDP-3-O-[(3R)-3-hydroxyacyl]-N-acetyl-alpha-D-glucosamine + H2O = a UDP-3-O-[(3R)-3-hydroxyacyl]-alpha-D-glucosamine + acetate. It participates in glycolipid biosynthesis; lipid IV(A) biosynthesis; lipid IV(A) from (3R)-3-hydroxytetradecanoyl-[acyl-carrier-protein] and UDP-N-acetyl-alpha-D-glucosamine: step 2/6. Catalyzes the hydrolysis of UDP-3-O-myristoyl-N-acetylglucosamine to form UDP-3-O-myristoylglucosamine and acetate, the committed step in lipid A biosynthesis. The protein is UDP-3-O-acyl-N-acetylglucosamine deacetylase of Cupriavidus necator (strain ATCC 17699 / DSM 428 / KCTC 22496 / NCIMB 10442 / H16 / Stanier 337) (Ralstonia eutropha).